We begin with the raw amino-acid sequence, 411 residues long: Bifunctional protein GlmU (411 aa).

Residues 1 to 204 (MDAIILCAGK…NGKLHGVELK (204 aa)) are pyrophosphorylase. UTP-binding positions include 6 to 9 (LCAG), Gln-74, and Gly-79. Positions 80, 130, 142, and 158 each coordinate N-acetyl-alpha-D-glucosamine 1-phosphate. Residues 205–224 (GYWNDIGHPWDVLSANNHFL) are linker. Residues 225–411 (NKIISKVSGK…DELVITKKRN (187 aa)) form an N-acetyltransferase region. Residue His-308 is the Proton acceptor of the active site. The acetyl-CoA site is built by Ala-384 and Lys-401.

The protein in the N-terminal section; belongs to the N-acetylglucosamine-1-phosphate uridyltransferase family. In the C-terminal section; belongs to the transferase hexapeptide repeat family.

The enzyme catalyses N-acetyl-alpha-D-glucosamine 1-phosphate + UTP + H(+) = UDP-N-acetyl-alpha-D-glucosamine + diphosphate. It carries out the reaction alpha-D-glucosamine 1-phosphate + acetyl-CoA = N-acetyl-alpha-D-glucosamine 1-phosphate + CoA + H(+). It functions in the pathway nucleotide-sugar biosynthesis; UDP-N-acetyl-alpha-D-glucosamine biosynthesis; N-acetyl-alpha-D-glucosamine 1-phosphate from alpha-D-glucosamine 6-phosphate (route II): step 2/2. It participates in nucleotide-sugar biosynthesis; UDP-N-acetyl-alpha-D-glucosamine biosynthesis; UDP-N-acetyl-alpha-D-glucosamine from N-acetyl-alpha-D-glucosamine 1-phosphate: step 1/1. Its function is as follows. Catalyzes the last two sequential reactions in the de novo biosynthetic pathway for UDP-N-acetyl-glucosamine (UDP-GlcNAc). Responsible for the acetylation of GlcN-1-P to GlcNAc-1-P, and for the uridyl transfer from UTP to GlcNAc-1-P, to produce UDP-GlcNAc and pyrophosphate. This Methanococcus maripaludis (strain DSM 14266 / JCM 13030 / NBRC 101832 / S2 / LL) protein is Bifunctional protein GlmU.